We begin with the raw amino-acid sequence, 375 residues long: Naringenin 7-O-methyltransferase (375 aa).

Position 136–142 (136–142 (LNLDKVF)) interacts with substrate. Residues 168–188 (LFQYLGQDGNEPSNTLFNQAM) form a substrate binding region. Residues Gly-219, Asp-242, Met-263, and Lys-276 each coordinate S-adenosyl-L-methionine. His-280 (proton acceptor) is an active-site residue.

It belongs to the class I-like SAM-binding methyltransferase superfamily. Cation-independent O-methyltransferase family. COMT subfamily.

The enzyme catalyses (2S)-naringenin + S-adenosyl-L-methionine = (2S)-sakuranetin + S-adenosyl-L-homocysteine + H(+). Its function is as follows. S-adenosyl-L-methionine-dependent methyltransferase involved in the biosynthesis of the sakuranetin, an inducible defense mechanism of O.sativa against pathogen attack. The chain is Naringenin 7-O-methyltransferase from Oryza sativa subsp. japonica (Rice).